The chain runs to 106 residues: uncharacterized protein (106 aa).

This sequence belongs to the HesB/IscA family.

This is an uncharacterized protein from Cereibacter sphaeroides (Rhodobacter sphaeroides).